The following is a 78-amino-acid chain: Translational regulator CsrA (78 aa).

The protein belongs to the CsrA/RsmA family. As to quaternary structure, homodimer; the beta-strands of each monomer intercalate to form a hydrophobic core, while the alpha-helices form wings that extend away from the core.

It localises to the cytoplasm. A translational regulator that binds mRNA to regulate translation initiation and/or mRNA stability. Usually binds in the 5'-UTR at or near the Shine-Dalgarno sequence preventing ribosome-binding, thus repressing translation. Its main target seems to be the major flagellin gene, while its function is anatagonized by FliW. This is Translational regulator CsrA from Borrelia recurrentis (strain A1).